Consider the following 510-residue polypeptide: Histidine ammonia-lyase (510 aa).

Residues Ala-143 to Gly-145 constitute a cross-link (5-imidazolinone (Ala-Gly)). Ser-144 carries the 2,3-didehydroalanine (Ser) modification.

It belongs to the PAL/histidase family. Post-translationally, contains an active site 4-methylidene-imidazol-5-one (MIO), which is formed autocatalytically by cyclization and dehydration of residues Ala-Ser-Gly.

The protein resides in the cytoplasm. The enzyme catalyses L-histidine = trans-urocanate + NH4(+). Its pathway is amino-acid degradation; L-histidine degradation into L-glutamate; N-formimidoyl-L-glutamate from L-histidine: step 1/3. The sequence is that of Histidine ammonia-lyase from Yersinia pestis.